Here is a 509-residue protein sequence, read N- to C-terminus: MLSRSLLCLALAWVARVGADAPEEEDNVLVLKKSNFAEALAAHNYLLVEFYAPWCGHCKALAPEYAKAAAKLKAEGSEIRLAKVDATEESDLAQQYGVRGYPTIKFFKNGDTASPKEYTAGREADDIVNWLKKRTGPAATTLSDTAAAETLIDSSEVAVIGFFKDVESDSAKQFLLAAEAVDDIPFGITSNSGVFSKYQLDKDGVVLFKKFDEGRNNFEGEVTKEKLLDFIKHNQLPLVIEFTEQTAPKIFGGEIKTHILLFLPKSVSDYDGKLGNFKKAAEGFKGKILFIFIDSDHTDNQRILEFFGLKKEECPAVRLITLEEEMTKYKPESDELTAEKITEFCHRFLEGKIKPHLMSQELPEDWDKQPVKVLVGKNFEEVAFDEKKNVFVEFYAPWCGHCKQLAPIWDKLGETYKDHENIIIAKMDSTANEVEAVKVHSFPTLKFFPATADRTVIDYNGERTLDGFKKFLESGGQDGAGDDDDVDLEEALEPDMEEDDDQKAVKDEL.

Residues 1–19 (MLSRSLLCLALAWVARVGA) form the signal peptide. The Thioredoxin 1 domain maps to 20-136 (DAPEEEDNVL…IVNWLKKRTG (117 aa)). Active-site nucleophile residues include C55 and C58. An intrachain disulfide couples C55 to C58. The residue at position 202 (K202) is an N6-acetyllysine. N6-succinyllysine is present on residues K224 and K273. S333 and S359 each carry phosphoserine. One can recognise a Thioredoxin 2 domain in the interval 335–477 (ELTAEKITEF…FKKFLESGGQ (143 aa)). Catalysis depends on nucleophile residues C399 and C402. A disulfide bond links C399 and C402. S429 carries the phosphoserine modification. Residues 473 to 509 (ESGGQDGAGDDDDVDLEEALEPDMEEDDDQKAVKDEL) form a disordered region. Residues 480–501 (AGDDDDVDLEEALEPDMEEDDD) show a composition bias toward acidic residues. Positions 506 to 509 (KDEL) match the Prevents secretion from ER motif.

It belongs to the protein disulfide isomerase family. As to quaternary structure, heterodimer; heterodimerizes with the protein microsomal triglyceride transfer MTTP. Homodimer. Homodimer. Monomers and homotetramers may also occur. Interacts with P4HA2, forming a heterotetramer consisting of 2 alpha subunits (P4HA2) and 2 beta (P4HB), where P4HB plays the role of a structural subunit; this tetramer catalyzes the formation of 4-hydroxyproline in collagen. Also constitutes the structural subunit of the microsomal triacylglycerol transfer protein MTTP in mammalian cells. Stabilizes both enzymes and retain them in the ER without contributing to the catalytic activity. Binds UBQLN1. Interacts with ERO1B. Interacts with ILDR2. Interacts with ERN1/IRE1A (via N-terminus); the interaction is enhanced by phosphorylation of P4HB by FAM20C in response to endoplasmic reticulum stress and results in attenuation of ERN1 activity. Phosphorylation of Ser-359 by FAM20C is induced by endoplasmic reticulum stress and results in a functional switch from oxidoreductase to molecular chaperone. It also promotes interaction with ERN1.

Its subcellular location is the endoplasmic reticulum. It localises to the endoplasmic reticulum lumen. The protein resides in the melanosome. It is found in the cell membrane. It carries out the reaction Catalyzes the rearrangement of -S-S- bonds in proteins.. In terms of biological role, this multifunctional protein catalyzes the formation, breakage and rearrangement of disulfide bonds. At the cell surface, seems to act as a reductase that cleaves disulfide bonds of proteins attached to the cell. May therefore cause structural modifications of exofacial proteins. Inside the cell, seems to form/rearrange disulfide bonds of nascent proteins. At high concentrations and following phosphorylation by FAM20C, functions as a chaperone that inhibits aggregation of misfolded proteins. At low concentrations, facilitates aggregation (anti-chaperone activity). May be involved with other chaperones in the structural modification of the TG precursor in hormone biogenesis. Also acts as a structural subunit of various enzymes such as prolyl 4-hydroxylase and microsomal triacylglycerol transfer protein MTTP. Receptor for LGALS9; the interaction retains P4HB at the cell surface of Th2 T helper cells, increasing disulfide reductase activity at the plasma membrane, altering the plasma membrane redox state and enhancing cell migration. In Cricetulus griseus (Chinese hamster), this protein is Protein disulfide-isomerase (P4HB).